A 372-amino-acid polypeptide reads, in one-letter code: MSTNDEENGTVIEVKNVPEPSPETWYSVFLRQASVYGVAAGYCLSASLLSIINKWAIMKFPYPGALTAMQYFTSAAGVLLCAQMKLIEHDSLNLLTMWRFLPAAMIFYLSLFTNSELLLHANVDTFIVFRSAVPIFVAIGETLFLHQPWPSVKTWGSLATIFGGSLLYVFTDYQFTIAAYSWALAYLVSMTIDFVYIKHVVMTIGLNTWGLVLYNNLEALLLFPLELLIMGELKKIKHEITDETDWYSLQVVLPVGLSCLFGLAISFFGFSCRRAISATGFTVLGIVNKLLTVVINLMVWDKHSTFVGTLGLLVCMFGGVMYQQSTIKKPNATQEAKPQEQDEEQEKLLEMQENKESNSVDIKETLKSEEKL.

10 helical membrane-spanning segments follow: residues 33-53 (ASVYGVAAGYCLSASLLSIIN), 60-80 (FPYPGALTAMQYFTSAAGVLL), 92-112 (LNLLTMWRFLPAAMIFYLSLF), 125-145 (TFIVFRSAVPIFVAIGETLFL), 155-175 (WGSLATIFGGSLLYVFTDYQF), 177-197 (IAAYSWALAYLVSMTIDFVYI), 209-229 (WGLVLYNNLEALLLFPLELLI), 251-271 (VVLPVGLSCLFGLAISFFGFS), 280-300 (GFTVLGIVNKLLTVVINLMVW), and 303-323 (HSTFVGTLGLLVCMFGGVMYQ). The disordered stretch occupies residues 331–372 (NATQEAKPQEQDEEQEKLLEMQENKESNSVDIKETLKSEEKL). The segment covering 346-372 (EKLLEMQENKESNSVDIKETLKSEEKL) has biased composition (basic and acidic residues).

This sequence belongs to the nucleotide-sugar transporter family. GDP-Mannose:GMP antiporter (GMA) (TC 2.A.7.13) subfamily. In terms of tissue distribution, expressed in rosette leaves, stems, flowers and siliques.

It localises to the golgi apparatus membrane. Its function is as follows. GDP-mannose transporter that may be involved in the import of GDP-mannose from the cytoplasm into the Golgi lumen. In Arabidopsis thaliana (Mouse-ear cress), this protein is GDP-mannose transporter GONST3.